The following is a 326-amino-acid chain: GTP 3',8-cyclase (326 aa).

In terms of domain architecture, Radical SAM core spans 7 to 232 (GFGRSFPYLR…PRAADAGPAR (226 aa)). Arg-16 serves as a coordination point for GTP. Positions 23 and 27 each coordinate [4Fe-4S] cluster. Residue Tyr-29 coordinates S-adenosyl-L-methionine. Cys-30 contacts [4Fe-4S] cluster. Arg-65 provides a ligand contact to GTP. Residue Gly-69 coordinates S-adenosyl-L-methionine. Residue Thr-96 coordinates GTP. Ser-120 lines the S-adenosyl-L-methionine pocket. GTP is bound at residue Lys-157. Met-191 contributes to the S-adenosyl-L-methionine binding site. Cys-254 and Cys-257 together coordinate [4Fe-4S] cluster. 259 to 261 (RLR) lines the GTP pocket. Cys-271 contributes to the [4Fe-4S] cluster binding site.

Belongs to the radical SAM superfamily. MoaA family. In terms of assembly, monomer and homodimer. The cofactor is [4Fe-4S] cluster.

The enzyme catalyses GTP + AH2 + S-adenosyl-L-methionine = (8S)-3',8-cyclo-7,8-dihydroguanosine 5'-triphosphate + 5'-deoxyadenosine + L-methionine + A + H(+). Its pathway is cofactor biosynthesis; molybdopterin biosynthesis. Catalyzes the cyclization of GTP to (8S)-3',8-cyclo-7,8-dihydroguanosine 5'-triphosphate. In Stenotrophomonas maltophilia (strain K279a), this protein is GTP 3',8-cyclase.